A 211-amino-acid chain; its full sequence is Imidazole glycerol phosphate synthase subunit HisH (211 aa).

The Glutamine amidotransferase type-1 domain maps to 3–211 (VIAVIDYDMG…VSQIKAPVLV (209 aa)). Cysteine 81 serves as the catalytic Nucleophile. Catalysis depends on residues histidine 186 and glutamate 188.

Heterodimer of HisH and HisF.

The protein localises to the cytoplasm. The enzyme catalyses 5-[(5-phospho-1-deoxy-D-ribulos-1-ylimino)methylamino]-1-(5-phospho-beta-D-ribosyl)imidazole-4-carboxamide + L-glutamine = D-erythro-1-(imidazol-4-yl)glycerol 3-phosphate + 5-amino-1-(5-phospho-beta-D-ribosyl)imidazole-4-carboxamide + L-glutamate + H(+). It carries out the reaction L-glutamine + H2O = L-glutamate + NH4(+). Its pathway is amino-acid biosynthesis; L-histidine biosynthesis; L-histidine from 5-phospho-alpha-D-ribose 1-diphosphate: step 5/9. In terms of biological role, IGPS catalyzes the conversion of PRFAR and glutamine to IGP, AICAR and glutamate. The HisH subunit catalyzes the hydrolysis of glutamine to glutamate and ammonia as part of the synthesis of IGP and AICAR. The resulting ammonia molecule is channeled to the active site of HisF. The sequence is that of Imidazole glycerol phosphate synthase subunit HisH from Cyanothece sp. (strain PCC 7425 / ATCC 29141).